Consider the following 200-residue polypeptide: NADH-quinone oxidoreductase subunit C (200 aa).

It belongs to the complex I 30 kDa subunit family. As to quaternary structure, NDH-1 is composed of 14 different subunits. Subunits NuoB, C, D, E, F, and G constitute the peripheral sector of the complex.

The protein resides in the cell inner membrane. The catalysed reaction is a quinone + NADH + 5 H(+)(in) = a quinol + NAD(+) + 4 H(+)(out). Functionally, NDH-1 shuttles electrons from NADH, via FMN and iron-sulfur (Fe-S) centers, to quinones in the respiratory chain. The immediate electron acceptor for the enzyme in this species is believed to be ubiquinone. Couples the redox reaction to proton translocation (for every two electrons transferred, four hydrogen ions are translocated across the cytoplasmic membrane), and thus conserves the redox energy in a proton gradient. The polypeptide is NADH-quinone oxidoreductase subunit C (Burkholderia vietnamiensis (strain G4 / LMG 22486) (Burkholderia cepacia (strain R1808))).